The primary structure comprises 221 residues: N-(5'-phosphoribosyl)anthranilate isomerase (221 aa).

The protein belongs to the TrpF family.

It catalyses the reaction N-(5-phospho-beta-D-ribosyl)anthranilate = 1-(2-carboxyphenylamino)-1-deoxy-D-ribulose 5-phosphate. It participates in amino-acid biosynthesis; L-tryptophan biosynthesis; L-tryptophan from chorismate: step 3/5. The polypeptide is N-(5'-phosphoribosyl)anthranilate isomerase (Geobacillus thermodenitrificans (strain NG80-2)).